The following is a 338-amino-acid chain: 1-aminocyclopropane-1-carboxylate deaminase (338 aa).

N6-(pyridoxal phosphate)lysine is present on Lys51. The active-site Nucleophile is Ser78.

The protein belongs to the ACC deaminase/D-cysteine desulfhydrase family. Homotrimer. It depends on pyridoxal 5'-phosphate as a cofactor.

It carries out the reaction 1-aminocyclopropane-1-carboxylate + H2O = 2-oxobutanoate + NH4(+). In terms of biological role, catalyzes a cyclopropane ring-opening reaction, the irreversible conversion of 1-aminocyclopropane-1-carboxylate (ACC) to ammonia and alpha-ketobutyrate. Allows growth on ACC as a nitrogen source. This Paraburkholderia phytofirmans (strain DSM 17436 / LMG 22146 / PsJN) (Burkholderia phytofirmans) protein is 1-aminocyclopropane-1-carboxylate deaminase.